A 354-amino-acid chain; its full sequence is Homeobox-leucine zipper protein HOX27 (354 aa).

Positions 98 to 175 (SVAAGAPGME…DDEGASARKK (78 aa)) are disordered. Residues 148 to 157 (QGGGGGGGGE) show a composition bias toward gly residues. The homeobox DNA-binding region spans 171–230 (SARKKLRLSKEQSAFLEESFKEHSTLNPKQKVALAKQLNLRPRQVEVWFQNRRARTKLKQ). The segment at 229–273 (KQTEVDCEYLKRCCETLTEENRRLHKELAELRALKTARPFYMHLP) is leucine-zipper. A disordered region spans residues 294-323 (STSAPAAATSPAAAPTAAARTAVASPEPHR).

The protein belongs to the HD-ZIP homeobox family. Class II subfamily. Expressed in seedlings, roots, stems, leaf sheaths and blades and panicles.

The protein localises to the nucleus. Functionally, probable transcription factor. In Oryza sativa subsp. japonica (Rice), this protein is Homeobox-leucine zipper protein HOX27 (HOX27).